We begin with the raw amino-acid sequence, 186 residues long: Threonylcarbamoyl-AMP synthase (186 aa).

One can recognise a YrdC-like domain in the interval 2-186; that stretch reads PNEFELAVAA…ARTGAIIRPS (185 aa).

The protein belongs to the SUA5 family. TsaC subfamily.

It is found in the cytoplasm. The enzyme catalyses L-threonine + hydrogencarbonate + ATP = L-threonylcarbamoyladenylate + diphosphate + H2O. In terms of biological role, required for the formation of a threonylcarbamoyl group on adenosine at position 37 (t(6)A37) in tRNAs that read codons beginning with adenine. Catalyzes the conversion of L-threonine, HCO(3)(-)/CO(2) and ATP to give threonylcarbamoyl-AMP (TC-AMP) as the acyladenylate intermediate, with the release of diphosphate. This is Threonylcarbamoyl-AMP synthase from Aeromonas hydrophila subsp. hydrophila (strain ATCC 7966 / DSM 30187 / BCRC 13018 / CCUG 14551 / JCM 1027 / KCTC 2358 / NCIMB 9240 / NCTC 8049).